The primary structure comprises 115 residues: NAD(P)H-quinone oxidoreductase subunit M (115 aa).

It belongs to the complex I NdhM subunit family. NDH-1 can be composed of about 15 different subunits; different subcomplexes with different compositions have been identified which probably have different functions.

Its subcellular location is the cellular thylakoid membrane. It carries out the reaction a plastoquinone + NADH + (n+1) H(+)(in) = a plastoquinol + NAD(+) + n H(+)(out). It catalyses the reaction a plastoquinone + NADPH + (n+1) H(+)(in) = a plastoquinol + NADP(+) + n H(+)(out). Its function is as follows. NDH-1 shuttles electrons from an unknown electron donor, via FMN and iron-sulfur (Fe-S) centers, to quinones in the respiratory and/or the photosynthetic chain. The immediate electron acceptor for the enzyme in this species is believed to be plastoquinone. Couples the redox reaction to proton translocation, and thus conserves the redox energy in a proton gradient. Cyanobacterial NDH-1 also plays a role in inorganic carbon-concentration. The chain is NAD(P)H-quinone oxidoreductase subunit M from Prochlorococcus marinus (strain MIT 9515).